The sequence spans 287 residues: tRNA selenocysteine 1-associated protein 1 (287 aa).

2 consecutive RRM domains span residues Ala3–Tyr86 and Tyr96–Pro175.

It belongs to the RRM TRSPAP family. In terms of assembly, component of the tRNA(Sec) complex composed at least of EEFSEC, SECISBP2, SEPHS1, SEPSECS, TRNAU1AP and tRNA(Sec). Found in a complex with tRNA(Sec). Interacts with SEPSECS. Associates with mRNP and/or polysomes. Found in a complex with EEFSEC, SECISBP2, TRNAU1AP and tRNA(Sec).

Its subcellular location is the nucleus. The protein resides in the cytoplasm. Functionally, involved in the early steps of selenocysteine biosynthesis and tRNA(Sec) charging to the later steps resulting in the cotranslational incorporation of selenocysteine into selenoproteins. Stabilizes the SECISBP2, EEFSEC and tRNA(Sec) complex. May be involved in the methylation of tRNA(Sec). Enhances efficiency of selenoproteins synthesis. In Homo sapiens (Human), this protein is tRNA selenocysteine 1-associated protein 1 (TRNAU1AP).